The following is a 464-amino-acid chain: MTVKTRFAPSPTGYLHIGGVRTALFSWAFARHHKGEFLLRIEDTDLARSTAESVNIILDGMKWVGLDYDNAGNVVYQTRRFDRYKEVIAELLEKGDAYYCYCSKEELEAMREKAEKEGTATYDRRWRPEAGKTLPEIPAGVQPVVRFKTPLDGVTKWTDLVKGEISIPNEALDDLIIARADGTPTYNFCVVVDDYDMGVTHVIRGDDHVNNTPKQINILKAIGATLPEYGHLPMILNEQGKKISKRSGDTVAITDFGAMGILPEAMLNYLARLGWAHGDDEFFTMEQFIEWFDLKDVSPSPSRMDLKKLYWINGEHIKITPNGKLAELVKPRLALRDIHETEKPALEDVLALVKDRAQDLNTLADECLYFYVKQTPTEADVQKHWDDEAAARMLRFAERLEGLEDWNTEAIHDLFKPFCDEEGIKMGKLGMPLRLAVCGTAKTPSVDAVLALIGKEEVLKRIRA.

Residues 9–19 carry the 'HIGH' region motif; it reads PSPTGYLHIGG. Positions 242-246 match the 'KMSKS' region motif; sequence KISKR. K245 is a binding site for ATP.

Belongs to the class-I aminoacyl-tRNA synthetase family. Glutamate--tRNA ligase type 1 subfamily. Monomer.

It is found in the cytoplasm. It carries out the reaction tRNA(Glu) + L-glutamate + ATP = L-glutamyl-tRNA(Glu) + AMP + diphosphate. Functionally, catalyzes the attachment of glutamate to tRNA(Glu) in a two-step reaction: glutamate is first activated by ATP to form Glu-AMP and then transferred to the acceptor end of tRNA(Glu). The chain is Glutamate--tRNA ligase from Neisseria meningitidis serogroup C (strain 053442).